We begin with the raw amino-acid sequence, 708 residues long: Nicastrin (708 aa).

A signal peptide spans Met1–Ala27. At Gly28–Glu668 the chain is on the lumenal side. 3 N-linked (GlcNAc...) asparagine glycosylation sites follow: Asn44, Asn54, and Asn128. Cys49 and Cys61 form a disulfide bridge. Residues Cys139 and Cys158 are joined by a disulfide bond. Asn186 and Asn203 each carry an N-linked (GlcNAc...) asparagine glycan. 2 cysteine pairs are disulfide-bonded: Cys194–Cys212 and Cys229–Cys247. Residues Asn263, Asn386, Asn434, Asn463, Asn505, Asn529, Asn561, Asn572, Asn579, Asn593, and Asn611 are each glycosylated (N-linked (GlcNAc...) asparagine). Cys585 and Cys619 form a disulfide bridge. Residues Phe669 to Ile689 traverse the membrane as a helical segment. At Asn690–Tyr708 the chain is on the cytoplasmic side.

Belongs to the nicastrin family. In terms of assembly, component of the gamma-secretase complex. The functional gamma-secretase complex is composed of at least four polypeptides: a presenilin homodimer (PSEN1 or PSEN2), nicastrin (NCSTN), APH1 (APH1A or APH1B) and PEN2. Binds to proteolytic processed C-terminal fragments C83 and C99 of the amyloid precursor protein (APP). Interacts with PSEN1 and PSEN2. N-glycosylated.

The protein resides in the membrane. Its subcellular location is the cytoplasmic vesicle membrane. It is found in the melanosome. Essential subunit of the gamma-secretase complex, an endoprotease complex that catalyzes the intramembrane cleavage of integral membrane proteins such as Notch receptors and APP (amyloid-beta precursor protein). The gamma-secretase complex plays a role in Notch and Wnt signaling cascades and regulation of downstream processes via its role in processing key regulatory proteins, and by regulating cytosolic CTNNB1 levels. This Mus musculus (Mouse) protein is Nicastrin (Ncstn).